The following is a 164-amino-acid chain: Large ribosomal subunit protein bL19 (164 aa).

The segment at 144–164 is disordered; the sequence is EAEKQTEVQAEPKIEKSEEKK.

It belongs to the bacterial ribosomal protein bL19 family.

This protein is located at the 30S-50S ribosomal subunit interface and may play a role in the structure and function of the aminoacyl-tRNA binding site. This Pelagibacter ubique (strain HTCC1062) protein is Large ribosomal subunit protein bL19.